The primary structure comprises 156 residues: Small ribosomal subunit protein uS7 (156 aa).

The protein belongs to the universal ribosomal protein uS7 family. Part of the 30S ribosomal subunit. Contacts proteins S9 and S11.

Its function is as follows. One of the primary rRNA binding proteins, it binds directly to 16S rRNA where it nucleates assembly of the head domain of the 30S subunit. Is located at the subunit interface close to the decoding center, probably blocks exit of the E-site tRNA. This Clostridium botulinum (strain Kyoto / Type A2) protein is Small ribosomal subunit protein uS7.